The primary structure comprises 704 residues: Elongation factor G (704 aa).

The region spanning 8–291 is the tr-type G domain; it reads DKVRNIGIMA…TVVECLPSPV (284 aa). Residues 17–24, 90–94, and 144–147 contribute to the GTP site; these read AHIDAGKT, DTPGH, and NKMD.

This sequence belongs to the TRAFAC class translation factor GTPase superfamily. Classic translation factor GTPase family. EF-G/EF-2 subfamily.

Its subcellular location is the cytoplasm. Catalyzes the GTP-dependent ribosomal translocation step during translation elongation. During this step, the ribosome changes from the pre-translocational (PRE) to the post-translocational (POST) state as the newly formed A-site-bound peptidyl-tRNA and P-site-bound deacylated tRNA move to the P and E sites, respectively. Catalyzes the coordinated movement of the two tRNA molecules, the mRNA and conformational changes in the ribosome. In Prosthecochloris aestuarii (strain DSM 271 / SK 413), this protein is Elongation factor G.